Consider the following 166-residue polypeptide: NADH-ubiquinone oxidoreductase chain 6 (166 aa).

5 helical membrane passes run 1–21 (MMYF…AFAS), 26–46 (IYGG…VVSL), 47–67 (GGSF…LVVF), 87–107 (VFTN…YFSG), and 139–159 (CGGW…FVVL).

This sequence belongs to the complex I subunit 6 family. In terms of assembly, core subunit of respiratory chain NADH dehydrogenase (Complex I) which is composed of 45 different subunits.

The protein localises to the mitochondrion inner membrane. It carries out the reaction a ubiquinone + NADH + 5 H(+)(in) = a ubiquinol + NAD(+) + 4 H(+)(out). Its function is as follows. Core subunit of the mitochondrial membrane respiratory chain NADH dehydrogenase (Complex I) which catalyzes electron transfer from NADH through the respiratory chain, using ubiquinone as an electron acceptor. Essential for the catalytic activity and assembly of complex I. In Ornithorhynchus anatinus (Duckbill platypus), this protein is NADH-ubiquinone oxidoreductase chain 6 (MT-ND6).